Here is a 156-residue protein sequence, read N- to C-terminus: Cyanate hydratase (156 aa).

Active-site residues include R96, E99, and S122.

Belongs to the cyanase family.

It carries out the reaction cyanate + hydrogencarbonate + 3 H(+) = NH4(+) + 2 CO2. Its function is as follows. Catalyzes the reaction of cyanate with bicarbonate to produce ammonia and carbon dioxide. This chain is Cyanate hydratase, found in Burkholderia vietnamiensis (strain G4 / LMG 22486) (Burkholderia cepacia (strain R1808)).